The following is a 242-amino-acid chain: Probable septum site-determining protein MinC (242 aa).

Residues 120-135 are compositionally biased toward basic and acidic residues; sequence APKKVEEKPAEPEHKP. Positions 120–144 are disordered; that stretch reads APKKVEEKPAEPEHKPSRIVTSPVR.

It belongs to the MinC family. Interacts with MinD and FtsZ.

Its function is as follows. Cell division inhibitor that blocks the formation of polar Z ring septums. Rapidly oscillates between the poles of the cell to destabilize FtsZ filaments that have formed before they mature into polar Z rings. Prevents FtsZ polymerization. This is Probable septum site-determining protein MinC from Ectopseudomonas mendocina (strain ymp) (Pseudomonas mendocina).